Consider the following 89-residue polypeptide: Small ribosomal subunit protein uS14 (89 aa).

It belongs to the universal ribosomal protein uS14 family. In terms of assembly, part of the 30S ribosomal subunit. Contacts proteins S3 and S10.

Binds 16S rRNA, required for the assembly of 30S particles and may also be responsible for determining the conformation of the 16S rRNA at the A site. The polypeptide is Small ribosomal subunit protein uS14 (Chlorobium phaeobacteroides (strain BS1)).